A 142-amino-acid chain; its full sequence is Large ribosomal subunit protein uL13 (142 aa).

Belongs to the universal ribosomal protein uL13 family. Part of the 50S ribosomal subunit.

This protein is one of the early assembly proteins of the 50S ribosomal subunit, although it is not seen to bind rRNA by itself. It is important during the early stages of 50S assembly. The protein is Large ribosomal subunit protein uL13 of Psychrobacter arcticus (strain DSM 17307 / VKM B-2377 / 273-4).